The following is a 150-amino-acid chain: Large ribosomal subunit protein uL13 (150 aa).

Residues 127–150 (KGTEHPHSAQKPQPLQLNPSATAK) form a disordered region. Residues 136-150 (QKPQPLQLNPSATAK) show a composition bias toward polar residues.

Belongs to the universal ribosomal protein uL13 family. Part of the 50S ribosomal subunit.

In terms of biological role, this protein is one of the early assembly proteins of the 50S ribosomal subunit, although it is not seen to bind rRNA by itself. It is important during the early stages of 50S assembly. The chain is Large ribosomal subunit protein uL13 from Synechococcus sp. (strain CC9902).